The primary structure comprises 261 residues: MICOS complex subunit Mic25 (261 aa).

Residue G2 is the site of N-myristoyl glycine attachment. 3 positions are modified to phosphoserine: S13, S31, and S33. 3 disordered regions span residues 39–59, 81–114, and 140–165; these read KDCS…PECS, CGPA…VKED, and TEKH…RLTR. The stretch at 109-202 forms a coiled coil; that stretch reads SAVKEDLKKF…AELYKLSSQQ (94 aa). Positions 154–165 are enriched in basic and acidic residues; that stretch reads THEQQQSDRLTR. The 42-residue stretch at 220–261 folds into the CHCH domain; that stretch reads EPVCSGLQAQILRCYRDHLHEVLLCSDLAKAYQHCVSTARKG. 2 short sequence motifs (cx9C motif) span residues 223–233 and 244–254; these read CSGLQAQILRC and CSDLAKAYQHC. 2 cysteine pairs are disulfide-bonded: C223/C254 and C233/C244.

Belongs to the MICOS complex subunit Mic19 family. Metazoan Mic25 subfamily. In terms of assembly, component of the mitochondrial contact site and cristae organizing system (MICOS) complex, composed of at least MICOS10/MIC10, CHCHD3/MIC19, CHCHD6/MIC25, APOOL/MIC27, IMMT/MIC60, APOO/MIC23/MIC26 and MICOS13/MIC13. This complex was also known under the names MINOS or MitOS complex. The MICOS complex associates with mitochondrial outer membrane proteins SAMM50, MTX1 and MTX2 (together described as components of the mitochondrial outer membrane sorting assembly machinery (SAM) complex) and DNAJC11, mitochondrial inner membrane protein TMEM11 and with HSPA9. The MICOS and SAM complexes together with DNAJC11 are part of a large protein complex spanning both membranes termed the mitochondrial intermembrane space bridging (MIB) complex. Interacts with DISC1. Interacts with IMMT/MIC60.

The protein localises to the mitochondrion inner membrane. The protein resides in the mitochondrion. Component of the MICOS complex, a large protein complex of the mitochondrial inner membrane that plays crucial roles in the maintenance of crista junctions, inner membrane architecture, and formation of contact sites to the outer membrane. The polypeptide is MICOS complex subunit Mic25 (Chchd6) (Rattus norvegicus (Rat)).